The primary structure comprises 286 residues: Pantothenate synthetase (286 aa).

ATP is bound at residue 30–37 (MGFLHEGH). H37 acts as the Proton donor in catalysis. A (R)-pantoate-binding site is contributed by Q61. Residue Q61 coordinates beta-alanine. 147–150 (GLKD) serves as a coordination point for ATP. Q153 is a (R)-pantoate binding site. ATP is bound by residues V176 and 184–187 (KSSR).

Belongs to the pantothenate synthetase family. Homodimer.

It is found in the cytoplasm. The catalysed reaction is (R)-pantoate + beta-alanine + ATP = (R)-pantothenate + AMP + diphosphate + H(+). Its pathway is cofactor biosynthesis; (R)-pantothenate biosynthesis; (R)-pantothenate from (R)-pantoate and beta-alanine: step 1/1. Functionally, catalyzes the condensation of pantoate with beta-alanine in an ATP-dependent reaction via a pantoyl-adenylate intermediate. This is Pantothenate synthetase from Bacillus velezensis (strain DSM 23117 / BGSC 10A6 / LMG 26770 / FZB42) (Bacillus amyloliquefaciens subsp. plantarum).